Consider the following 253-residue polypeptide: Sulfur carrier protein FdhD (253 aa).

Cys100 acts as the Cysteine persulfide intermediate in catalysis.

Belongs to the FdhD family.

The protein localises to the cytoplasm. Required for formate dehydrogenase (FDH) activity. Acts as a sulfur carrier protein that transfers sulfur from IscS to the molybdenum cofactor prior to its insertion into FDH. This chain is Sulfur carrier protein FdhD, found in Sulfolobus acidocaldarius (strain ATCC 33909 / DSM 639 / JCM 8929 / NBRC 15157 / NCIMB 11770).